A 118-amino-acid polypeptide reads, in one-letter code: Small ribosomal subunit protein uS13 (118 aa).

A disordered region spans residues 94–118; the sequence is SLPLRGQRTKTNARTRKGPRKPIKK.

It belongs to the universal ribosomal protein uS13 family. As to quaternary structure, part of the 30S ribosomal subunit. Forms a loose heterodimer with protein S19. Forms two bridges to the 50S subunit in the 70S ribosome.

Its function is as follows. Located at the top of the head of the 30S subunit, it contacts several helices of the 16S rRNA. In the 70S ribosome it contacts the 23S rRNA (bridge B1a) and protein L5 of the 50S subunit (bridge B1b), connecting the 2 subunits; these bridges are implicated in subunit movement. Contacts the tRNAs in the A and P-sites. The sequence is that of Small ribosomal subunit protein uS13 from Vibrio parahaemolyticus serotype O3:K6 (strain RIMD 2210633).